The chain runs to 419 residues: BTB/POZ domain-containing protein KCTD20 (419 aa).

In terms of domain architecture, BTB spans 117-191 (EKVTLLVDGT…YKTGIINCPD (75 aa)).

Interacts with AKT1; AKT2 and AKT3. Interacts with PPP2CA and PPP1CA. Part of a complex containing MARK4. Ubiquitously expressed.

Its subcellular location is the cytoplasm. Its function is as follows. Promotes the phosphorylation of AKT family members. The protein is BTB/POZ domain-containing protein KCTD20 (Kctd20) of Mus musculus (Mouse).